Reading from the N-terminus, the 191-residue chain is Protein DMP10 (191 aa).

4 helical membrane passes run 15–35, 48–68, 114–134, and 158–178; these read FANL…PSFS, LLTI…SFTD, LSFV…ALAV, and LMIK…FAIF.

It belongs to the plant DMP1 protein family. As to expression, restricted to flowers.

The protein localises to the membrane. Involved in membrane remodeling. This Arabidopsis thaliana (Mouse-ear cress) protein is Protein DMP10.